Here is a 607-residue protein sequence, read N- to C-terminus: Elongation factor 4 (607 aa).

The 183-residue stretch at 11 to 193 folds into the tr-type G domain; the sequence is SKIRNFSIIA…QIVEKVPAPT (183 aa). Residues 23–28 and 140–143 each bind GTP; these read DHGKST and NKID.

It belongs to the TRAFAC class translation factor GTPase superfamily. Classic translation factor GTPase family. LepA subfamily.

The protein resides in the cell membrane. The enzyme catalyses GTP + H2O = GDP + phosphate + H(+). Required for accurate and efficient protein synthesis under certain stress conditions. May act as a fidelity factor of the translation reaction, by catalyzing a one-codon backward translocation of tRNAs on improperly translocated ribosomes. Back-translocation proceeds from a post-translocation (POST) complex to a pre-translocation (PRE) complex, thus giving elongation factor G a second chance to translocate the tRNAs correctly. Binds to ribosomes in a GTP-dependent manner. This Bacillus cereus (strain ATCC 10987 / NRS 248) protein is Elongation factor 4.